We begin with the raw amino-acid sequence, 309 residues long: Pseudouridine-5'-phosphate glycosidase 2 (309 aa).

The active-site Proton donor is the E26. K87 and V107 together coordinate substrate. D139 is a Mn(2+) binding site. 141–143 provides a ligand contact to substrate; sequence SAD. Residue K160 is the Nucleophile of the active site.

This sequence belongs to the pseudouridine-5'-phosphate glycosidase family. In terms of assembly, homotrimer. Mn(2+) is required as a cofactor.

The catalysed reaction is D-ribose 5-phosphate + uracil = psi-UMP + H2O. In terms of biological role, catalyzes the reversible cleavage of pseudouridine 5'-phosphate (PsiMP) to ribose 5-phosphate and uracil. Functions biologically in the cleavage direction, as part of a pseudouridine degradation pathway. The protein is Pseudouridine-5'-phosphate glycosidase 2 of Rhizobium johnstonii (strain DSM 114642 / LMG 32736 / 3841) (Rhizobium leguminosarum bv. viciae).